The sequence spans 137 residues: Proofreading thioesterase EntH (137 aa).

Glu63 acts as the Nucleophile or proton acceptor in catalysis.

It belongs to the thioesterase PaaI family. In terms of assembly, homotetramer. Dimer of dimers. Interacts specifically with the aryl carrier protein (ArCP) domain of EntB.

It localises to the cytoplasm. It participates in siderophore biosynthesis; enterobactin biosynthesis. Functionally, required for optimal enterobactin synthesis. Acts as a proofreading enzyme that prevents EntB misacylation by hydrolyzing the thioester bound existing between EntB and wrongly charged molecules. The sequence is that of Proofreading thioesterase EntH from Shigella sonnei (strain Ss046).